The sequence spans 509 residues: Sulfoacetate--CoA ligase (509 aa).

The segment at 320 to 340 (AFSNPLDPGQRRIGSIGRPSG) is disordered.

Belongs to the ATP-dependent AMP-binding enzyme family.

It is found in the cytoplasm. It catalyses the reaction sulfoacetate + ATP + CoA = sulfoacetyl-CoA + AMP + diphosphate. Functionally, involved in the degradation of sulfoacetate, a widespread natural product. Catalyzes the CoA- and ATP-dependent conversion of sulfoacetate to sulfoacetyl-CoA and AMP. The sequence is that of Sulfoacetate--CoA ligase from Cupriavidus necator (strain ATCC 17699 / DSM 428 / KCTC 22496 / NCIMB 10442 / H16 / Stanier 337) (Ralstonia eutropha).